The sequence spans 252 residues: Transcriptional regulatory protein HptR (252 aa).

The Response regulatory domain maps to 3-118; it reads KVVICDDERI…QLEVILGRLV (116 aa). A 4-aspartylphosphate modification is found at aspartate 55. The HTH araC/xylS-type domain maps to 153–250; sequence NQIVDQIKQS…QMSPSDYCKQ (98 aa). 2 DNA-binding regions (H-T-H motif) span residues 170-191 and 217-240; these read SDLIQHIDVSESYAMRTFKDHV and HYEIADKVGFSEYKMFSYHFKKYL.

In terms of processing, phosphorylated by HptS.

The protein resides in the cytoplasm. Its function is as follows. Member of the two-component regulatory system HptS/HptR that regulates genes involved in hexose phosphate transport system in response to changes in extracellular phosphate sources. Activates uhpT expression to facilitate glucose-6-phosphate/G6P utilization by directly binding to its promoter. Antagonizes CcpA-dependent transcription of a subset of CcpA-regulated genes involved in antibiotic susceptibility. The chain is Transcriptional regulatory protein HptR (hptR) from Staphylococcus aureus (strain MRSA252).